The primary structure comprises 473 residues: Digalactosyldiacylglycerol synthase 2, chloroplastic (473 aa).

2 interaction with the membrane lipid bilayer regions span residues 130-148 (LTWF…YVIG) and 227-245 (QPFT…SKGY).

Belongs to the glycosyltransferase group 1 family. Glycosyltransferase 4 subfamily. As to expression, expressed in leaves, flowers and roots, but not in stems and siliques.

The protein resides in the plastid. The protein localises to the chloroplast outer membrane. The catalysed reaction is a 1,2-diacyl-3-O-(beta-D-galactosyl)-sn-glycerol + UDP-alpha-D-galactose = a 1,2-diacyl-3-O-[alpha-D-galactosyl-(1-&gt;6)-beta-D-galactosyl]-sn-glycerol + UDP + H(+). With respect to regulation, stimulated by anionic phospholipids. In terms of biological role, involved in the synthesis of diacylglycerol galactolipids that are specifically found in thylakoid membranes. Specific for alpha-glycosidic linkages. During phosphate shortage, involved in the biosynthesis of digalactosyldiacylglycerol (DGDG) which rescues the limitation of phospholipids. In Arabidopsis thaliana (Mouse-ear cress), this protein is Digalactosyldiacylglycerol synthase 2, chloroplastic.